The sequence spans 661 residues: Potassium voltage-gated channel subfamily KQT member 1 (661 aa).

Disordered regions lie at residues 1 to 29 (MAAASTPPRAERKRXSWSRLPGAQRESAG) and 42 to 88 (ESGP…SLDP). The Cytoplasmic portion of the chain corresponds to 1–119 (MAAASTPPRA…YNFLERPTGW (119 aa)). S27 carries the post-translational modification Phosphoserine; by PKA. Residues 54 to 85 (VSPPSAPEPAPPASPASPAPPAADQGPQPPVS) are compositionally biased toward pro residues. Residues 120–141 (KCFAYHFTVFLIVLVCLIFSVL) traverse the membrane as a helical segment. The Extracellular portion of the chain corresponds to 142–152 (STIEQYATLAT). Residues 153 to 175 (GTLFWMEIVLVVFFGTEYVVRLW) form a helical membrane-spanning segment. Residues 176–191 (SAGCRSKYVGLWGRLR) lie on the Cytoplasmic side of the membrane. Residues 192-217 (FARKPISIIDLIVVVASMVVLCVGSK) form a helical membrane-spanning segment. Over 218 to 225 (GQVFATSA) the chain is Extracellular. The chain crosses the membrane as a helical; Voltage-sensor span at residues 226-241 (IRGIRFLQILRMLHVD). Residues 237–245 (MLHVDRQGG) are interaction with KCNE3. The Cytoplasmic portion of the chain corresponds to 242 to 259 (RQGGTWRLLGSVVFIHRQ). Q243 is a binding site for a 1,2-diacyl-sn-glycero-3-phospho-(1D-myo-inositol-4,5-bisphosphate). The chain crosses the membrane as a helical span at residues 260 to 282 (ELITTLYIGFLGLIFSSYFVYLA). At 283 to 298 (EKDAVNESGRVEFGSY) the chain is on the extracellular side. N-linked (GlcNAc...) asparagine glycosylation is present at N288. Positions 299–319 (ADALWWGVVTVTTIGYGDKVP) form an intramembrane region, pore-forming. The Extracellular portion of the chain corresponds to 320-321 (QT). A helical membrane pass occupies residues 322 to 347 (WVGKTIASCFSVFAISFFALPAGILG). Topologically, residues 348-661 (SGFALKVQQK…VPRRDPEEGS (314 aa)) are cytoplasmic. Residues 369–381 (AAASLIQTAWRCY) form an interaction with CALM region. Phosphoserine occurs at positions 406 and 408. Residues 514 to 528 (KVIRRMQYFVAKKKF) are interaction with CALM; calcium-dependent. Residues 534–571 (PYDVRDVIEQYSQGHLNLMVRIKELQRRLDQSIGKPSL) form an interaction with KCNE1 C-terminus region. A coiled-coil region spans residues 584 to 620 (SNSIGARLNRVEDKVTQLDQRLVLIADMLQQLLALHQ). The interaction with AKAP9 stretch occupies residues 587 to 615 (IGARLNRVEDKVTQLDQRLVLIADMLQQL). Residues 588-619 (GARLNRVEDKVTQLDQRLVLIADMLQQLLALH) are C-terminal assembly domain (tetramerization). Residues 624–661 (HGGAHPAQARDGDPADPELFLPTYEQLTVPRRDPEEGS) form a disordered region.

It belongs to the potassium channel family. KQT (TC 1.A.1.15) subfamily. Kv7.1/KCNQ1 sub-subfamily. As to quaternary structure, tetramer. Heterotetramer with KCNE1; targets to the membrane raft. Interacts (via C-terminus) with CALM; forms a heterooctameric structure (with 4:4 KCNQ1:CALM stoichiometry) in a calcium-independent manner. Interacts with AKAP9; targets protein kinase A (PKA) catalytic and regulatory subunits and protein phosphatase 1 (PP1) to the KCNQ1-KCNE1 complex, allowing PKA-mediated phosphorylation and increase of delayed rectifier potassium channel activity. Interacts with KCNE2; form a heterooligomer complex that targets to the membrane raft and leading to currents with an apparently instantaneous activation, a rapid deactivation process and a linear current-voltage relationship and decreases the amplitude of the outward current. Interacts with AP2M1; mediates estrogen-induced internalization via clathrin-coated vesicles. Interacts with NEDD4L; promotes internalization and decreases I(Ks) currents. Interacts with USP2; counteracts the NEDD4L-specific down-regulation of I(Ks) and restore plasma membrane localization. Heterotetramer with KCNQ5; has a voltage-gated potassium channel activity. Interacts with KCNE3; four KCNE3 molecules are bound to one KCNQ1 tetramer (4:4 KCNQ1:KCNE3 stoichiometry); alters membrane raft localization; affects KCNQ1 structure and gating properties. Interacts with KCNE4; impairs KCNQ1 localization in lipid rafts and inhibits voltage-gated potassium channel activity. Interacts with KCNE5; impairs KCNQ1 localization in lipid rafts and only conducts current upon strong and continued depolarization. Interacts with SLC5A3; forms coregulatory channel-transporter complexes that modulate Na(+)-coupled myo-inositol influx through the transporter. Post-translationally, phosphorylation at Ser-27 by PKA; increases delayed rectifier potassium channel activity of the KCNQ1-KCNE1 complex through a macromolecular complex that includes PKA, PP1, and the targeting protein AKAP9. Ubiquitinated by NEDD4L; promotes internalization. The ubiquitinylated form is internalized through a clathrin-mediated endocytosis by interacting with AP2M1 and is recycled back to the cell membrane via RAB4A and RAB11A. In terms of processing, deubiquitinated by USP2; counteracts the NEDD4L-specific down-regulation of I(Ks) and restores the membrane localization.

It is found in the cell membrane. It localises to the cytoplasmic vesicle membrane. The protein localises to the early endosome. Its subcellular location is the membrane raft. The protein resides in the endoplasmic reticulum. It is found in the basolateral cell membrane. It localises to the apical cell membrane. It carries out the reaction K(+)(in) = K(+)(out). Its activity is regulated as follows. PIP2 molecule is essential to activate KCNQ channels by inducing the coupling of the voltage-sensing domain (VSD) and the pore-forming domain (PD). Upon channel activation, PIP2 disrupts the VSD-calmodulin/CALM interactions, causing the release of CALM from the VSD which triggers the opening of the gate. Calcium potentiates KCNQ1 channel current through calcium-bound CALM. Calcium-bound CALM competes with PIP2 to stabilize the channel open state. Functionally, pore-forming subunit of the voltage-gated potassium (Kv) channel involved in the regulation of cardiomyocyte excitability and important in normal development and functions of myocardium, inner ear, stomach and colon. Associates with KCNE beta subunits that modulates current kinetics. Induces a voltage-dependent by rapidly activating and slowly deactivating potassium-selective outward current. Also promotes a delayed voltage activated potassium current showing outward rectification characteristic. During beta-adrenergic receptor stimulation participates in cardiac repolarization by associating with KCNE1 to form the I(Ks) cardiac potassium current that increases the amplitude and slows down the activation kinetics of outward potassium current I(Ks). Muscarinic agonist oxotremorine-M strongly suppresses KCNQ1/KCNE1 current. When associated with KCNE3, forms the potassium channel that is important for cyclic AMP-stimulated intestinal secretion of chloride ions. This interaction with KCNE3 is reduced by 17beta-estradiol, resulting in the reduction of currents. During conditions of increased substrate load, maintains the driving force for proximal tubular and intestinal sodium ions absorption, gastric acid secretion, and cAMP-induced jejunal chloride ions secretion. Allows the provision of potassium ions to the luminal membrane of the secretory canaliculus in the resting state as well as during stimulated acid secretion. When associated with KCNE2, forms a heterooligomer complex leading to currents with an apparently instantaneous activation, a rapid deactivation process and a linear current-voltage relationship and decreases the amplitude of the outward current. When associated with KCNE4, inhibits voltage-gated potassium channel activity. When associated with KCNE5, this complex only conducts current upon strong and continued depolarization. Also forms a heterotetramer with KCNQ5 that has a voltage-gated potassium channel activity. Binds with phosphatidylinositol 4,5-bisphosphate. KCNQ1-KCNE2 channel associates with Na(+)-coupled myo-inositol symporter in the apical membrane of choroid plexus epithelium and regulates the myo-inositol gradient between blood and cerebrospinal fluid with an impact on neuron excitability. The protein is Potassium voltage-gated channel subfamily KQT member 1 of Oryctolagus cuniculus (Rabbit).